Consider the following 467-residue polypeptide: UDP-N-acetylmuramate--L-alanine ligase (467 aa).

114–120 (GTHGKTT) serves as a coordination point for ATP.

This sequence belongs to the MurCDEF family.

Its subcellular location is the cytoplasm. It catalyses the reaction UDP-N-acetyl-alpha-D-muramate + L-alanine + ATP = UDP-N-acetyl-alpha-D-muramoyl-L-alanine + ADP + phosphate + H(+). The protein operates within cell wall biogenesis; peptidoglycan biosynthesis. Cell wall formation. This chain is UDP-N-acetylmuramate--L-alanine ligase, found in Bradyrhizobium diazoefficiens (strain JCM 10833 / BCRC 13528 / IAM 13628 / NBRC 14792 / USDA 110).